Reading from the N-terminus, the 80-residue chain is Omega-conotoxin-like 2/7 (80 aa).

Residues 1–22 (MKLTCMMIVAVMFLTASIFITA) form the signal peptide. The propeptide occupies 23–51 (DNSRNGIENLPRMRRHEMKKPKASKLNKR). 3 disulfide bridges follow: cysteine 53-cysteine 71, cysteine 60-cysteine 75, and cysteine 70-cysteine 79.

It belongs to the conotoxin O1 superfamily. In terms of tissue distribution, expressed by the venom duct.

Its subcellular location is the secreted. Omega-conotoxins act at presynaptic membranes, they bind and block voltage-gated calcium channels (Cav). The chain is Omega-conotoxin-like 2/7 from Conus imperialis (Imperial cone).